A 110-amino-acid polypeptide reads, in one-letter code: Large ribosomal subunit protein uL22 (110 aa).

It belongs to the universal ribosomal protein uL22 family. As to quaternary structure, part of the 50S ribosomal subunit.

This protein binds specifically to 23S rRNA; its binding is stimulated by other ribosomal proteins, e.g. L4, L17, and L20. It is important during the early stages of 50S assembly. It makes multiple contacts with different domains of the 23S rRNA in the assembled 50S subunit and ribosome. Functionally, the globular domain of the protein is located near the polypeptide exit tunnel on the outside of the subunit, while an extended beta-hairpin is found that lines the wall of the exit tunnel in the center of the 70S ribosome. The polypeptide is Large ribosomal subunit protein uL22 (Idiomarina loihiensis (strain ATCC BAA-735 / DSM 15497 / L2-TR)).